The chain runs to 341 residues: Basic membrane protein B (341 aa).

Residues 1-14 (MRIVIFIFGILLTS) form the signal peptide. Residue Cys-15 is the site of N-palmitoyl cysteine attachment. A lipid anchor (S-diacylglycerol cysteine) is attached at Cys-15.

It belongs to the BMP lipoprotein family. As to quaternary structure, monomer.

The protein resides in the cell inner membrane. In terms of biological role, may be part of an ABC-type nucleoside uptake system involved in the purine salvage pathway. The chain is Basic membrane protein B (bmpB) from Borreliella burgdorferi (strain ATCC 35210 / DSM 4680 / CIP 102532 / B31) (Borrelia burgdorferi).